A 297-amino-acid polypeptide reads, in one-letter code: Leucine-rich repeat-containing protein 25 (297 aa).

The N-terminal stretch at 1 to 25 (MGSIRTRLLWLCLLMLLALLHKSGS) is a signal peptide. Topologically, residues 26–169 (QDLTCMVHPS…SCPPSWGPGT (144 aa)) are extracellular. N-linked (GlcNAc...) asparagine glycans are attached at residues Asn-44 and Asn-49. LRR repeat units follow at residues 66–89 (HAQVLDLSKNGLQVLPGAFFDKLE) and 90–113 (KLQTLIVTHNQLDSVDRSLALRCD). 2 N-linked (GlcNAc...) asparagine glycosylation sites follow: Asn-133 and Asn-152. The helical transmembrane segment at 170-190 (IGALVAGTISLAVAVSGSVLA) threads the bilayer. Topologically, residues 191–297 (WRLLRRRRRA…VYCNLESLGR (107 aa)) are cytoplasmic. A disordered region spans residues 202–244 (EHSLSKAQMSPHDIPKPVTDFLPRYSSRRPGPKAPDSPPSRFT). Ser-211, Ser-238, and Ser-267 each carry phosphoserine. At Tyr-289 the chain carries Phosphotyrosine.

In terms of assembly, interacts with RIGI. Interacts with SQSTM1. Interacts with p65/RELA; this interaction promotes the degradation of RELA through autophagy.

It is found in the membrane. The protein localises to the cytoplasm. In terms of biological role, plays a role in the inhibition of RLR-mediated type I interferon signaling pathway by targeting RIGI for autophagic degradation. Interacts specifically with ISG15-associated RIGI to promote interaction between RIGI and the autophagic cargo receptor p62/SQSTM1 to mediate RIGI degradation via selective autophagy. Plays also a role in the inhibition of NF-kappa-B signaling pathway and inflammatory response by promoting the degradation of p65/RELA. In Mus musculus (Mouse), this protein is Leucine-rich repeat-containing protein 25 (Lrrc25).